A 264-amino-acid chain; its full sequence is Transcription initiation factor TFIID subunit 9 (264 aa).

N6-acetyllysine is present on Lys5. Phosphoserine is present on residues Ser149, Ser152, Ser155, and Ser158. The interval 150 to 174 (VGSVSSRPSTPTLGTPTPQAMSVST) is disordered. Positions 151 to 174 (GSVSSRPSTPTLGTPTPQAMSVST) are enriched in polar residues. A phosphothreonine mark is found at Thr159, Thr161, Thr164, and Thr178. Ser181 and Ser196 each carry phosphoserine. Residues 233–264 (QNTANESANALKRKREEEDDDDDDDDDDYDNL) are disordered. Residues 249–264 (EEDDDDDDDDDDYDNL) are compositionally biased toward acidic residues.

It belongs to the TAF9 family. In terms of assembly, component of the TFIID basal transcription factor complex, composed of TATA-box-binding protein TBP, and a number of TBP-associated factors (TAFs), including TAF1, TAF2, TAF3, TAF4, TAF5, TAF6, TAF7, TAF8, TAF9, TAF10, TAF11, TAF12 and TAF13. Component of the TATA-binding protein-free TAF complex (TFTC), the PCAF histone acetylase complex and the STAGA transcription coactivator-HAT complex. The PCAF complex consists at least of TADA2L/ADA2, SUPT3H/SPT3, TADA3L/ADA3, TAF5L/PAF65-beta, TAF6L/PAF65-alpha, TAF10/TAFII30, TAF12/TAFII20, TAF9/TAFII31 and TRRAP. The STAGA transcription coactivator-HAT complex consists at least of SUPT3H, GCN5L2, SUPT7L, TAF5L, TAF6L, TADA3L, TAD1L, TAF10, TAF12, TRRAP and TAF9. Binds N-terminal domain of p53/TP53 which is essential for transcription. Component of some MLL1/MLL complex, at least composed of the core components KMT2A/MLL1, ASH2L, HCFC1/HCF1, WDR5 and RBBP5, as well as the facultative components BACC1, CHD8, E2F6, HSP70, INO80C, KANSL1, LAS1L, MAX, MCRS1, MGA, MYST1/MOF, PELP1, PHF20, PRP31, RING2, RUVB1/TIP49A, RUVB2/TIP49B, SENP3, TAF1, TAF4, TAF6, TAF7, TAF9 and TEX10. Binds TFIIB and the Herpes simplex virus activator VP16. Forms a heterodimer with TAF6 in a complex with the TAF4B-TAF12 heterodimer. Also interacts with TAF5. Binds directly DNA. Increased DNA binding when complexed with TAF6.

It is found in the nucleus. In terms of biological role, the TFIID basal transcription factor complex plays a major role in the initiation of RNA polymerase II (Pol II)-dependent transcription. TFIID recognizes and binds promoters with or without a TATA box via its subunit TBP, a TATA-box-binding protein, and promotes assembly of the pre-initiation complex (PIC). The TFIID complex consists of TBP and TBP-associated factors (TAFs), including TAF1, TAF2, TAF3, TAF4, TAF5, TAF6, TAF7, TAF8, TAF9, TAF10, TAF11, TAF12 and TAF13. TAF9 is also a component of the TBP-free TAFII complex (TFTC), the PCAF histone acetylase complex and the STAGA transcription coactivator-HAT complex. TAF9 and its paralog TAF9B are involved in transcriptional activation as well as repression of distinct but overlapping sets of genes. Essential for cell viability. May have a role in gene regulation associated with apoptosis. This chain is Transcription initiation factor TFIID subunit 9, found in Rattus norvegicus (Rat).